The sequence spans 258 residues: Acyl-[acyl-carrier-protein]--UDP-N-acetylglucosamine O-acyltransferase (258 aa).

Belongs to the transferase hexapeptide repeat family. LpxA subfamily. In terms of assembly, homotrimer.

It localises to the cytoplasm. The enzyme catalyses a (3R)-hydroxyacyl-[ACP] + UDP-N-acetyl-alpha-D-glucosamine = a UDP-3-O-[(3R)-3-hydroxyacyl]-N-acetyl-alpha-D-glucosamine + holo-[ACP]. It participates in glycolipid biosynthesis; lipid IV(A) biosynthesis; lipid IV(A) from (3R)-3-hydroxytetradecanoyl-[acyl-carrier-protein] and UDP-N-acetyl-alpha-D-glucosamine: step 1/6. Functionally, involved in the biosynthesis of lipid A, a phosphorylated glycolipid that anchors the lipopolysaccharide to the outer membrane of the cell. The chain is Acyl-[acyl-carrier-protein]--UDP-N-acetylglucosamine O-acyltransferase from Stutzerimonas stutzeri (strain A1501) (Pseudomonas stutzeri).